A 33-amino-acid chain; its full sequence is Beta-theraphotoxin-Cm1a (33 aa).

Cystine bridges form between Cys-2–Cys-17, Cys-9–Cys-22, and Cys-16–Cys-29. The residue at position 33 (Leu-33) is a Leucine amide.

The protein belongs to the neurotoxin 10 (Hwtx-1) family. 04 (CcoTx1) subfamily. As to expression, expressed by the venom gland.

Its subcellular location is the secreted. Inhibits many voltage-gated sodium channels and one voltage-gated calcium channel (Cav2.2/CACNA1B (IC(50)=400 nM), Nav1.2/SCN2A (IC(50)=3-70 nM), Nav1.1/SCN1A (IC(50)=523-1060 nM), Nav1.7/SCN9A (IC(50)=129.1-5120 nM), Nav1.4/SCN4A (IC(50)=263-888 nM or &gt;10 uM) and Nav1.5/SCN5A (IC(50)=188-323 nM or &gt;10 uM)). It acts by shifting the voltage dependence of channel activation to more depolarized potentials and by blocking the inward component of the sodium current. It shows moderate affinity for lipid bilayers. On Nav1.7/SCN9A, it has been shown to interact with the S3-S4 loop of domain DII (site 4). Is significantly more potent against Nav1.2/SCN2A than the other Nav channel subtypes. In vivo, this toxin causes general ataxia, lack of response to stimuli, and semiparalysis. After a few minutes, the mice are unable to stand, and breathing is reduced in rhythm and intensity. Symptoms gradually increase with progressive slowing of breathing and flaccid paralysis, death occurred within 10 to 20 minutes post injection. Animals remain totally flaccid, and no symptoms of excitatory neurotoxicity are observed. In Ceratogyrus marshalli (Straighthorned baboon tarantula), this protein is Beta-theraphotoxin-Cm1a.